The chain runs to 443 residues: Xaa-Pro dipeptidase (443 aa).

Mn(2+) contacts are provided by Asp246, Asp257, His339, Glu384, and Glu423.

This sequence belongs to the peptidase M24B family. Bacterial-type prolidase subfamily. It depends on Mn(2+) as a cofactor.

The enzyme catalyses Xaa-L-Pro dipeptide + H2O = an L-alpha-amino acid + L-proline. Functionally, splits dipeptides with a prolyl residue in the C-terminal position. This Escherichia coli (strain 55989 / EAEC) protein is Xaa-Pro dipeptidase.